A 690-amino-acid chain; its full sequence is Protein SPT2 homolog (690 aa).

An important for interaction with DNA region spans residues 1–579 (MDFHNILVMA…PGHRPVFRPQ (579 aa)). Residues 40 to 82 (ESAAVQAFLRRKEEEKRKKELEEKRKKERLLAKRIELKHDRKA) are a coiled coil. Disordered stretches follow at residues 105–167 (PKKR…APAP) and 186–619 (EIKV…QEEI). Residues 186-228 (EIKVVKKIEERPRTAEELREREYLERKNKRVETQKKKSEKEVK) show a composition bias toward basic and acidic residues. Positions 229–243 (SAGISSSSKKATSLK) are enriched in low complexity. 2 stretches are compositionally biased toward basic and acidic residues: residues 244–259 (ECAD…DKHA) and 271–285 (TDKK…EKHS). Residues 369–380 (HETNSSAKRPSS) show a composition bias toward polar residues. The span at 383–396 (GKGGSGHPAGGSSA) shows a compositional bias: gly residues. Residues 397–442 (GPGRSSSNSGTGPGRPGSVSSPGPGRQGSSSAAGPGRPSSSSSLGP) show a composition bias toward low complexity. Gly residues-rich tracts occupy residues 443 to 457 (GRLG…GRPG), 465 to 477 (GRPG…GPGR), and 489 to 521 (LGSG…GPGR). The span at 545–565 (VSETISSKNLVTRPSNGQING) shows a compositional bias: polar residues. Positions 580–690 (GIGRPPVGYK…KRQSKKLRTR (111 aa)) are important for interaction with histones. Over residues 593–617 (DDDDDDDEYDSEMDDFIEDEGEPQE) the composition is skewed to acidic residues. A coiled-coil region spans residues 650–690 (REQQKEEARSLRLGVQEDLEELRREEEELKRKRQSKKLRTR).

Belongs to the SPT2 family. Interacts with POLR1A. Interacts with histones. Interacts with a heterotetrameric complex formed by histone H3 and H4, especially when the histone tetramer is not bound to DNA.

The protein localises to the nucleus. Its subcellular location is the nucleolus. In terms of biological role, histone chaperone that stabilizes pre-existing histone tetramers and regulates replication-independent histone exchange on chromatin. Required for normal chromatin refolding in the coding region of transcribed genes, and for the suppression of spurious transcription. Binds DNA and histones and promotes nucleosome assembly (in vitro). Modulates RNA polymerase 1-mediated transcription. Required for optimal growth in the presence of the DNA damaging agents actinomycin D or mitomycin C (in vitro). Facilitates formation of tetrameric histone complexes containing histone H3 and H4. Modulates RNA polymerase 1-mediated transcription. Binds DNA, with a preference for branched DNA species, such as Y-form DNA and Holliday junction DNA. The protein is Protein SPT2 homolog (SPTY2D1) of Gallus gallus (Chicken).